Consider the following 471-residue polypeptide: MANKAVNDFILAMNYDKKKLLTHQGESIENRFIKEGNQLPDEFVVIERKKRSLSTNTSDISVTATNDSRLYPGALLVVDETLLENNPTLLAVDRAPMTYSIDLPGLASSDSFLQVEDPSNSSVRGAVNDLLAKWHQDYGQVNNVPARMQYEKITAHSMEQLKVKFGSDFEKTGNSLDIDFNSVHSGEKQIQIVNFKQIYYTVSVDAVKNPGDVFQDTVTVEDLKQRGISAERPLVYISSVAYGRQVYLKLETTSKSDEVEAAFEALIKGVKVAPQTEWKQILDNTEVKAVILGGDPSSGARVVTGKVDMVEDLIQEGSRFTADHPGLPISYTTSFLRDNVVATFQNSTDYVETKVTAYRNGDLLLDHSGAYVAQYYITWDELSYDHQGKEVLTPKAWDRNGQDLTAHFTTSIPLKGNVRNLSVKIRECTGLAWEWWRTVYEKTDLPLVRKRTISIWGTTLYPQVEDKVEND.

A run of 4 beta stranded transmembrane segments spans residues 158 to 171 (MEQL…DFEK), 178 to 187 (IDFNSVHSGE), 256 to 265 (SDEVEAAFEA), and 273 to 285 (APQT…LDNT). Positions 427-437 (ECTGLAWEWWR) match the Conserved undecapeptide motif. Residues 459–460 (TL) carry the Cholesterol binding motif.

It belongs to the cholesterol-dependent cytolysin family. Elongated monomers align along their lengths, indicating intersubunit contacts and suggesting the prepore structure. Modeling based on cryo-EM shows a homooligomeric pore complex containing 38-44 subunits; when inserted in the host membrane. The size of isolated pores is detergent-dependent; in amphipol A8-35 homogenous rings form with 42 subunits.

The protein localises to the secreted. It is found in the host cell membrane. Erythrocytes hemolysis is inhibited by cholesterol. Its function is as follows. A cholesterol-dependent toxin that causes cytolysis by forming pores in cholesterol-containing host membranes. After binding to target membranes, the protein undergoes a major conformation change, leading to its insertion in the host membrane and formation of an oligomeric pore complex. Cholesterol is required for binding to host membranes, membrane insertion and pore formation; cholesterol binding is mediated by a Thr-Leu pair in the C-terminus. Can be reversibly inactivated by oxidation. The polypeptide is Pneumolysin (ply) (Streptococcus pneumoniae serotype 2 (strain D39 / NCTC 7466)).